A 76-amino-acid chain; its full sequence is Conotoxin ArMKLT2-032 (76 aa).

A signal peptide spans 1–22; that stretch reads MKLTCVLIIAVLFLTACQLTTG. The propeptide occupies 23–46; sequence ETYSRGEQKDHALRSTDKNSKLTR. Pyrrolidone carboxylic acid is present on Q47. 3 disulfides stabilise this stretch: C48–C62, C55–C66, and C61–C73.

Belongs to the conotoxin O1 superfamily. As to expression, expressed by the venom duct.

The protein resides in the secreted. This is Conotoxin ArMKLT2-032 from Conus arenatus (Sand-dusted cone).